Here is a 238-residue protein sequence, read N- to C-terminus: UDP-2,3-diacylglucosamine hydrolase (238 aa).

Mn(2+) contacts are provided by aspartate 8, histidine 10, aspartate 41, asparagine 78, and histidine 113. Residue asparagine 78–arginine 79 participates in substrate binding. Positions 121, 159, 163, 166, and 194 each coordinate substrate. Residues histidine 194 and histidine 196 each contribute to the Mn(2+) site.

Belongs to the LpxH family. It depends on Mn(2+) as a cofactor.

The protein resides in the cell inner membrane. The catalysed reaction is UDP-2-N,3-O-bis[(3R)-3-hydroxytetradecanoyl]-alpha-D-glucosamine + H2O = 2-N,3-O-bis[(3R)-3-hydroxytetradecanoyl]-alpha-D-glucosaminyl 1-phosphate + UMP + 2 H(+). It participates in glycolipid biosynthesis; lipid IV(A) biosynthesis; lipid IV(A) from (3R)-3-hydroxytetradecanoyl-[acyl-carrier-protein] and UDP-N-acetyl-alpha-D-glucosamine: step 4/6. In terms of biological role, hydrolyzes the pyrophosphate bond of UDP-2,3-diacylglucosamine to yield 2,3-diacylglucosamine 1-phosphate (lipid X) and UMP by catalyzing the attack of water at the alpha-P atom. Involved in the biosynthesis of lipid A, a phosphorylated glycolipid that anchors the lipopolysaccharide to the outer membrane of the cell. This Shewanella piezotolerans (strain WP3 / JCM 13877) protein is UDP-2,3-diacylglucosamine hydrolase.